Reading from the N-terminus, the 1197-residue chain is Pleckstrin homology domain-containing family A member 7 (1197 aa).

WW domains are found at residues 8–41 (DTLP…HPRT) and 53–86 (SDLP…HPVT). The segment at 98–148 (LQDQPGGRMLKQPSSTISEASTTVTTSTVDSTSGSKGSRSSGRVHSFGKRD) is disordered. Positions 111–140 (SSTISEASTTVTTSTVDSTSGSKGSRSSGR) are enriched in low complexity. The 100-residue stretch at 158-257 (PVVVRGWLYK…WVRAMNQAAL (100 aa)) folds into the PH domain. 3 disordered regions span residues 348-384 (PGST…NGMP), 423-467 (LVST…QLPS), and 508-577 (FRHG…TVRP). The segment covering 528-546 (VSSTRNNSDVSRSVSVPPT) has biased composition (low complexity). The span at 568–577 (TPAERVTVRP) shows a compositional bias: basic and acidic residues. Positions 678–799 (DKILQELEFR…RIEDVMTGLS (122 aa)) form a coiled coil. Disordered stretches follow at residues 830 to 928 (SRCM…SYSN) and 1032 to 1064 (HQRA…SDPG). Positions 913-924 (RQSDERKRDRES) are enriched in basic and acidic residues. The stretch at 1016–1044 (QRVRMSVEEQLERMKRHQRALVRERKRNL) forms a coiled coil. Over residues 1032 to 1043 (HQRALVRERKRN) the composition is skewed to basic residues.

The protein resides in the cell junction. It is found in the adherens junction. Its subcellular location is the cytoplasm. The protein localises to the cytoskeleton. It localises to the microtubule organizing center. The protein resides in the centrosome. In terms of biological role, required for zonula adherens biogenesis and maintenance. This is Pleckstrin homology domain-containing family A member 7 (plekha7) from Danio rerio (Zebrafish).